The sequence spans 116 residues: Flagellar transcriptional regulator FlhD (116 aa).

Belongs to the FlhD family. Homodimer; disulfide-linked. Forms a heterohexamer composed of two FlhC and four FlhD subunits. Each FlhC binds a FlhD dimer, forming a heterotrimer, and a hexamer assembles by dimerization of two heterotrimers.

The protein resides in the cytoplasm. In terms of biological role, functions in complex with FlhC as a master transcriptional regulator that regulates transcription of several flagellar and non-flagellar operons by binding to their promoter region. Activates expression of class 2 flagellar genes, including fliA, which is a flagellum-specific sigma factor that turns on the class 3 genes. Also regulates genes whose products function in a variety of physiological pathways. This is Flagellar transcriptional regulator FlhD from Escherichia coli O9:H4 (strain HS).